The sequence spans 485 residues: Glycogen synthase (485 aa).

Lysine 18 contacts ADP-alpha-D-glucose.

The protein belongs to the glycosyltransferase 1 family. Bacterial/plant glycogen synthase subfamily.

It carries out the reaction [(1-&gt;4)-alpha-D-glucosyl](n) + ADP-alpha-D-glucose = [(1-&gt;4)-alpha-D-glucosyl](n+1) + ADP + H(+). It participates in glycan biosynthesis; glycogen biosynthesis. Functionally, synthesizes alpha-1,4-glucan chains using ADP-glucose. This chain is Glycogen synthase, found in Dechloromonas aromatica (strain RCB).